Reading from the N-terminus, the 101-residue chain is Apolipoprotein C-II (101 aa).

The first 22 residues, 1-22, serve as a signal peptide directing secretion; it reads MGTRYFLVGFLILLVLGFEAQG. Residues 66-74 form a lipid binding region; that stretch reads TVDEKIRDI. A lipoprotein lipase cofactor region spans residues 78-101; sequence STAAVTTYAGIITDQVFSILSGED.

It belongs to the apolipoprotein C2 family. In terms of processing, proapolipoprotein C-II is synthesized as a sialic acid containing glycoprotein which is subsequently desialylated prior to its proteolytic processing. Post-translationally, proapolipoprotein C-II, the major form found in plasma undergoes proteolytic cleavage of its N-terminal hexapeptide to generate apolipoprotein C-II, which occurs as the minor form in plasma.

The protein resides in the secreted. In terms of biological role, component of chylomicrons, very low-density lipoproteins (VLDL), low-density lipoproteins (LDL), and high-density lipoproteins (HDL) in plasma. Plays an important role in lipoprotein metabolism as an activator of lipoprotein lipase. Both proapolipoprotein C-II and apolipoprotein C-II can activate lipoprotein lipase. This Capra hircus aegagrus (Wild goat) protein is Apolipoprotein C-II (APOC2).